We begin with the raw amino-acid sequence, 104 residues long: Gallinacin-11 (104 aa).

The N-terminal stretch at 1-22 (MKLFSCLMALLLFLLQAVPGLG) is a signal peptide. Cystine bridges form between cysteine 30/cysteine 60, cysteine 37/cysteine 53, and cysteine 43/cysteine 61.

Belongs to the beta-defensin family. In terms of tissue distribution, detected in outer membrane of the vitelline layer of the egg (at protein level). Expressed in the liver, gall bladder, kidney, testis, ovary and male and female reproductive tracts. Expressed in the ovarian stroma, but not in the ovarian follicles. No expression is detected in bone marrow.

The protein localises to the secreted. Its subcellular location is the cytoplasmic granule. Its function is as follows. Has bactericidal activity. This is Gallinacin-11 (GAL11) from Gallus gallus (Chicken).